We begin with the raw amino-acid sequence, 216 residues long: Thiamine-phosphate synthase (216 aa).

Residues 35–39 (QLRDK) and Asn-67 contribute to the 4-amino-2-methyl-5-(diphosphooxymethyl)pyrimidine site. The Mg(2+) site is built by Asp-68 and Asp-87. Ser-106 contributes to the 4-amino-2-methyl-5-(diphosphooxymethyl)pyrimidine binding site. 132–134 (TSS) lines the 2-[(2R,5Z)-2-carboxy-4-methylthiazol-5(2H)-ylidene]ethyl phosphate pocket. Lys-135 is a 4-amino-2-methyl-5-(diphosphooxymethyl)pyrimidine binding site. Residues Gly-163 and 183–184 (IS) each bind 2-[(2R,5Z)-2-carboxy-4-methylthiazol-5(2H)-ylidene]ethyl phosphate.

This sequence belongs to the thiamine-phosphate synthase family. Mg(2+) is required as a cofactor.

The enzyme catalyses 2-[(2R,5Z)-2-carboxy-4-methylthiazol-5(2H)-ylidene]ethyl phosphate + 4-amino-2-methyl-5-(diphosphooxymethyl)pyrimidine + 2 H(+) = thiamine phosphate + CO2 + diphosphate. The catalysed reaction is 2-(2-carboxy-4-methylthiazol-5-yl)ethyl phosphate + 4-amino-2-methyl-5-(diphosphooxymethyl)pyrimidine + 2 H(+) = thiamine phosphate + CO2 + diphosphate. It carries out the reaction 4-methyl-5-(2-phosphooxyethyl)-thiazole + 4-amino-2-methyl-5-(diphosphooxymethyl)pyrimidine + H(+) = thiamine phosphate + diphosphate. It functions in the pathway cofactor biosynthesis; thiamine diphosphate biosynthesis; thiamine phosphate from 4-amino-2-methyl-5-diphosphomethylpyrimidine and 4-methyl-5-(2-phosphoethyl)-thiazole: step 1/1. Functionally, condenses 4-methyl-5-(beta-hydroxyethyl)thiazole monophosphate (THZ-P) and 2-methyl-4-amino-5-hydroxymethyl pyrimidine pyrophosphate (HMP-PP) to form thiamine monophosphate (TMP). This chain is Thiamine-phosphate synthase, found in Methanoregula boonei (strain DSM 21154 / JCM 14090 / 6A8).